We begin with the raw amino-acid sequence, 307 residues long: Nicotinamide/nicotinic acid mononucleotide adenylyltransferase 2 (307 aa).

Positions 16 and 17 each coordinate NAD(+). H24 is a binding site for ATP. Residues W92 and T95 each contribute to the NAD(+) site. Residues C164 and C165 are each lipidated (S-palmitoyl cysteine). NAD(+) contacts are provided by G200, D202, L212, W213, and R232. An ATP-binding site is contributed by 271–274 (TKSR).

The protein belongs to the eukaryotic NMN adenylyltransferase family. As to quaternary structure, monomer. Mg(2+) serves as cofactor. Degraded in response to injured neurite. Degradation is caused by polyubiquitination by MYCBP2 after recognition by FBXO45. In terms of processing, palmitoylated; palmitoylation is required for membrane association. In terms of tissue distribution, expressed predominantly in the brain and nervous system.

Its subcellular location is the golgi apparatus membrane. The protein localises to the cytoplasmic vesicle membrane. It is found in the cytoplasm. The protein resides in the cell projection. It localises to the axon. It catalyses the reaction beta-nicotinamide D-ribonucleotide + ATP + H(+) = diphosphate + NAD(+). The enzyme catalyses nicotinate beta-D-ribonucleotide + ATP + H(+) = deamido-NAD(+) + diphosphate. It participates in cofactor biosynthesis; NAD(+) biosynthesis; NAD(+) from nicotinamide D-ribonucleotide: step 1/1. Its pathway is cofactor biosynthesis; NAD(+) biosynthesis; deamido-NAD(+) from nicotinate D-ribonucleotide: step 1/1. Its activity is regulated as follows. Inhibited by P1-(adenosine-5')-P3-(nicotinamide-riboside-5')-triphosphate (Np3AD) and P1-(adenosine-5')-P4-(nicotinamide-riboside-5')-tetraphosphate (Np4AD). Functionally, nicotinamide/nicotinate-nucleotide adenylyltransferase that acts as an axon maintenance factor. Axon survival factor required for the maintenance of healthy axons: acts by delaying Wallerian axon degeneration, an evolutionarily conserved process that drives the loss of damaged axons. Catalyzes the formation of NAD(+) from nicotinamide mononucleotide (NMN) and ATP. Can also use the deamidated form; nicotinic acid mononucleotide (NaMN) as substrate but with a lower efficiency. Cannot use triazofurin monophosphate (TrMP) as substrate. Also catalyzes the reverse reaction, i.e. the pyrophosphorolytic cleavage of NAD(+). For the pyrophosphorolytic activity prefers NAD(+), NADH and NaAD as substrates and degrades nicotinic acid adenine dinucleotide phosphate (NHD) less effectively. Fails to cleave phosphorylated dinucleotides NADP(+), NADPH and NaADP(+). Also acts as an activator of ADP-ribosylation by supporting the catalytic activity of PARP16 and promoting mono-ADP-ribosylation of ribosomes by PARP16. May be involved in the maintenance of axonal integrity. This is Nicotinamide/nicotinic acid mononucleotide adenylyltransferase 2 from Mus musculus (Mouse).